Consider the following 528-residue polypeptide: MELKAEEEEVGGVQPVSIQAFASSSTLHGLAHIFSYERLSLKRALWALCFLGSLAVLLCVCTERVQYYFHYHHVTKLDEVAASQLTFPAVTLCNLNEFRFSQVSKNDLYHAGELLALLNNRYEIPDTQMADEKQLEILQDKANFRSFKPKPFNMREFYDRAGHDIRDMLLSCHFRGEVCSAEDFKVVFTRYGKCYTFNSGRDGRPRLKTMKGGTGNGLEIMLDIQQDEYLPVWGETDETSFEAGIKVQIHSQDEPPFIDQLGFGVAPGFQTFVACQEQRLIYLPPPWGTCKAVTMDSDLDFFDSYSITACRIDCETRYLVENCNCRMVHMPGDAPYCTPEQYKECADPALDFLVEKDQEYCVCEMPCNLTRYGKELSMVKIPSKASAKYLAKKFNKSEQYIGENILVLDIFFEVLNYETIEQKKAYEIAGLLGDIGGQMGLFIGASILTVLELFDYAYEVIKHKLCRRGKCQKEAKRSSADKGVALSLDDVKRHNPCESLRGHPAGMTYAANILPHHPARGTFEDFTC.

Topologically, residues 1-49 (MELKAEEEEVGGVQPVSIQAFASSSTLHGLAHIFSYERLSLKRALWALC) are cytoplasmic. A helical transmembrane segment spans residues 50–66 (FLGSLAVLLCVCTERVQ). Topologically, residues 67 to 427 (YYFHYHHVTK…ETIEQKKAYE (361 aa)) are extracellular. 7 cysteine pairs are disulfide-bonded: cysteine 93-cysteine 194, cysteine 172-cysteine 179, cysteine 290-cysteine 367, cysteine 310-cysteine 363, cysteine 314-cysteine 361, cysteine 323-cysteine 345, and cysteine 325-cysteine 337. N-linked (GlcNAc...) asparagine glycosylation is found at asparagine 368 and asparagine 395. Residues 428–458 (IAGLLGDIGGQMGLFIGASILTVLELFDYAY) form a discontinuously helical membrane-spanning segment. The GAS motif; ion selectivity filter signature appears at 444 to 446 (GAS). At 459-528 (EVIKHKLCRR…ARGTFEDFTC (70 aa)) the chain is on the cytoplasmic side. Serine 479 carries the post-translational modification Phosphoserine; by PKA. Position 499 is a phosphoserine (serine 499).

The protein belongs to the amiloride-sensitive sodium channel (TC 1.A.6) family. ASIC1 subfamily. In terms of assembly, forms functional homotrimeric channels. Forms heterotrimers with other ASIC proteins, resulting in channels with distinct properties. Interacts with PICK1; regulates ASIC1 clustering in membranes. Interacts with STOM; alters heterotrimeric channels activity. Post-translationally, pH-gating could be regulated by serine proteases. In terms of processing, phosphorylation by PKA regulates interaction with PICK1 and subcellular localization. Phosphorylation by PKC may regulate the channel. In terms of tissue distribution, expressed in neurons throughout the central and peripheral nervous system.

The protein resides in the cell membrane. The protein localises to the postsynaptic cell membrane. It is found in the cell projection. Its subcellular location is the dendrite. It catalyses the reaction Na(+)(in) = Na(+)(out). The catalysed reaction is K(+)(in) = K(+)(out). It carries out the reaction Li(+)(in) = Li(+)(out). The enzyme catalyses Ca(2+)(in) = Ca(2+)(out). Potentiated by FMRFamide-related neuropeptides, which are induced during inflammation and modulate pain responses. Inhibited by the diuretic drug amiloride. Spider venom psalmotoxin-1 inhibits the channel by locking it in its desensitized conformation. The homotrimeric channel is inhibited by the spider venom pi-theraphotoxin-Hm3a. Homotrimeric and heterotrimeric (with ASIC2 isoform 1) channels are inhibited by the snake venom mambalgin-1, which prevents proton-induced transitions from the resting closed state to the active and/or desensitized states. Inhibited by Texas coral snake toxin MitTx1. Functionally, forms voltage-independent, pH-gated trimeric sodium channels that act as postsynaptic excitatory receptors in the nervous system, playing a crucial role in regulating synaptic plasticity, learning, and memory. Upon extracellular pH drop this channel elicits transient, fast activating, and completely desensitizing inward currents. Displays high selectivity for sodium ions but can also permit the permeation of other cations. Regulates more or less directly intracellular calcium concentration and CaMKII phosphorylation, and thereby the density of dendritic spines. Modulates neuronal activity in the circuits underlying innate fear. Has high selectivity for sodium ions, but can also be permeable to other cations including calcium, lithium and potassium. Its function is as follows. Produces acid activated currents with a reduced amplitude and inactivates faster. Has high selectivity for sodium ions but also supports a calcium-mediated current which is sustained and maintained as long as acidic conditions are present. Also potentially permeable to lithium and potassium. In terms of biological role, has no measurable proton-gated sodium channel activity in vitro. The sequence is that of Acid-sensing ion channel 1 from Homo sapiens (Human).